A 185-amino-acid chain; its full sequence is Elongation factor P 1 (185 aa).

Belongs to the elongation factor P family.

The protein resides in the cytoplasm. The protein operates within protein biosynthesis; polypeptide chain elongation. In terms of biological role, involved in peptide bond synthesis. Stimulates efficient translation and peptide-bond synthesis on native or reconstituted 70S ribosomes in vitro. Probably functions indirectly by altering the affinity of the ribosome for aminoacyl-tRNA, thus increasing their reactivity as acceptors for peptidyl transferase. This Chlamydia muridarum (strain MoPn / Nigg) protein is Elongation factor P 1 (efp1).